We begin with the raw amino-acid sequence, 660 residues long: DNA mismatch repair protein MutL (660 aa).

This sequence belongs to the DNA mismatch repair MutL/HexB family.

Functionally, this protein is involved in the repair of mismatches in DNA. It is required for dam-dependent methyl-directed DNA mismatch repair. May act as a 'molecular matchmaker', a protein that promotes the formation of a stable complex between two or more DNA-binding proteins in an ATP-dependent manner without itself being part of a final effector complex. This chain is DNA mismatch repair protein MutL, found in Streptococcus pyogenes serotype M12 (strain MGAS2096).